We begin with the raw amino-acid sequence, 336 residues long: Biotin synthase (336 aa).

The 230-residue stretch at 48–277 folds into the Radical SAM core domain; that stretch reads VFGDEVEFCS…QAELRLCGGR (230 aa). Residues Cys66, Cys70, and Cys73 each coordinate [4Fe-4S] cluster. 4 residues coordinate [2Fe-2S] cluster: Cys110, Cys142, Cys202, and Arg272.

The protein belongs to the radical SAM superfamily. Biotin synthase family. In terms of assembly, homodimer. The cofactor is [4Fe-4S] cluster. [2Fe-2S] cluster serves as cofactor.

It catalyses the reaction (4R,5S)-dethiobiotin + (sulfur carrier)-SH + 2 reduced [2Fe-2S]-[ferredoxin] + 2 S-adenosyl-L-methionine = (sulfur carrier)-H + biotin + 2 5'-deoxyadenosine + 2 L-methionine + 2 oxidized [2Fe-2S]-[ferredoxin]. It participates in cofactor biosynthesis; biotin biosynthesis; biotin from 7,8-diaminononanoate: step 2/2. Functionally, catalyzes the conversion of dethiobiotin (DTB) to biotin by the insertion of a sulfur atom into dethiobiotin via a radical-based mechanism. This chain is Biotin synthase, found in Persephonella marina (strain DSM 14350 / EX-H1).